The sequence spans 285 residues: Acetylglutamate kinase (285 aa).

Substrate contacts are provided by residues 64–65 (GG), Arg86, and Asn181.

It belongs to the acetylglutamate kinase family. ArgB subfamily.

The protein localises to the cytoplasm. The catalysed reaction is N-acetyl-L-glutamate + ATP = N-acetyl-L-glutamyl 5-phosphate + ADP. It participates in amino-acid biosynthesis; L-arginine biosynthesis; N(2)-acetyl-L-ornithine from L-glutamate: step 2/4. Its function is as follows. Catalyzes the ATP-dependent phosphorylation of N-acetyl-L-glutamate. The polypeptide is Acetylglutamate kinase (Clostridium beijerinckii (strain ATCC 51743 / NCIMB 8052) (Clostridium acetobutylicum)).